The following is a 368-amino-acid chain: Cyclic di-GMP phosphodiesterase TM_0186 (368 aa).

The region spanning 2 to 114 (TVLIVEDDDI…LLRLKITHAL (113 aa)) is the Response regulatory domain. Aspartate 49 carries the post-translational modification 4-aspartylphosphate. In terms of domain architecture, HD-GYP spans 148–345 (YEDFLFEVLE…ITDVYRREKD (198 aa)). A divalent metal cation is bound by residues glutamate 169, histidine 173, histidine 205, aspartate 206, histidine 234, histidine 260, histidine 261, and aspartate 289. Residues 341-368 (RREKDEDTSHNGGRSHQSSPGEGVEGIR) form a disordered region. Residues 350–360 (HNGGRSHQSSP) are compositionally biased toward polar residues.

It catalyses the reaction 3',3'-c-di-GMP + 2 H2O = 2 GMP + 2 H(+). With respect to regulation, can function in vivo with either divalent iron or manganese occupying di- and trimetal sites. Dimetal is necessary and sufficient to catalyze conversion of c-di-GMP to pGpG, but conversion of pGpG to GMP requires an occupied trimetal site. Functionally, phosphodiesterase (PDE) that catalyzes the hydrolysis of cyclic diguanylate (c-di-GMP) to GMP. Hydrolyzes c-di-GMP to GMP in a two-step reaction, via the linear intermediate 5'-phosphoguanylyl(3'-&gt;5')guanosine (pGpG). The chain is Cyclic di-GMP phosphodiesterase TM_0186 from Thermotoga maritima (strain ATCC 43589 / DSM 3109 / JCM 10099 / NBRC 100826 / MSB8).